The following is a 357-amino-acid chain: MESSRGRPGPETDLLAVAEHQALVFGGGPGRTSSEPPAGLRVSGEEETENVGGANRHPRTSPKTSSCGVVHRPEREALENEPGPQGTLSGAGSRRGAPGAEHEPSLSSRHKNPAPPEGKPSSGRDCRRGGPGGGMDVEQQEEEDNDEEAAAGSRAGRSFSSRLQDSRSLDGLSEACGGAGSSGSAESGAGGGRRATISSPLELEGTVSRHGDLTHFVANNLQLKIRLSGAPPPPPSAPARPCPAPAPTPTPAIPPIDPEVLRDLERLSRELGGRVDRLLRGLGGAVQELTALSVGCIQTYRDAVDSLGEAVDMSIKGMYTLLARCEELERALQPVQGLARQVRDIRRTLEVLEALCK.

A disordered region spans residues 20–196 (HQALVFGGGP…SGAGGGRRAT (177 aa)). Positions 90 to 99 (GAGSRRGAPG) are enriched in low complexity. Residues 138-149 (EQQEEEDNDEEA) are compositionally biased toward acidic residues. Positions 150 to 162 (AAGSRAGRSFSSR) are enriched in low complexity. Ser-168 is modified (phosphoserine). Thr-196 carries the post-translational modification Phosphothreonine. Ser-199 carries the post-translational modification Phosphoserine. The interval 227 to 256 (LSGAPPPPPSAPARPCPAPAPTPTPAIPPI) is disordered. Pro residues predominate over residues 230-256 (APPPPPSAPARPCPAPAPTPTPAIPPI).

Belongs to the BORCS6 family. In terms of assembly, component of the BLOC-one-related complex (BORC) which is composed of BLOC1S1, BLOC1S2, BORCS5, BORCS6, BORCS7, BORCS8, KXD1 and SNAPIN.

It localises to the lysosome membrane. Its function is as follows. As part of the BORC complex may play a role in lysosomes movement and localization at the cell periphery. Associated with the cytosolic face of lysosomes, the BORC complex may recruit ARL8B and couple lysosomes to microtubule plus-end-directed kinesin motor. This Homo sapiens (Human) protein is BLOC-1-related complex subunit 6.